We begin with the raw amino-acid sequence, 147 residues long: Ribonuclease 4 (147 aa).

The N-terminal stretch at Met-1–Gly-28 is a signal peptide. Position 29 is a pyrrolidone carboxylic acid (Gln-29). Positions 35, 40, 68, 71, and 72 each coordinate dUMP. His-40 serves as the catalytic Proton acceptor. Cystine bridges form between Cys-53/Cys-109, Cys-67/Cys-120, Cys-85/Cys-135, and Cys-92/Cys-99. His-144 (proton donor) is an active-site residue. Phe-145 is a binding site for dUMP.

Belongs to the pancreatic ribonuclease family.

It is found in the secreted. Cleaves preferentially after uridine bases. Has antimicrobial activity against uropathogenic E.coli (UPEC). Probably contributes to urinary tract sterility. This Pongo abelii (Sumatran orangutan) protein is Ribonuclease 4 (RNASE4).